Reading from the N-terminus, the 880-residue chain is MAQHEVSMPPKYDHRAVEAGRYEWWLKGKFFEATGDPNKRPFTIVIPPPNVTGKLHLGHAWDTTLQDIITRMKRMQGYDVLWLPGMDHAGIATQAKVEEKLRQQGLSRYDLGREKFLEETWKWKEEYAGHIRSQWAKLGLGLDYTRERFTLDEGLSKAVREVFVSLYRKGLIYRGEYIINWDPVTKTALSDIEVVYKEVKGALYHMRYPLADGSGFIEVATTRPETMLGDTAVAVHPDDERYKHLIGKMVKLPIVGREIPIIADEYVDMEFGSGAVKITPAHDPNDFEIGNRHNLPRILVMNEDGTMNENAMQYQGLDRFECRKQIVRDLQEQGVLFKIEEHVHSVGHSERSGAVIEPYLSTQWFVKMKPLAEAAIKLQQTDGKVQFVPERFEKTYLHWLENIRHWCISRQLWWGHRIPAWYHKETGEIYVDHEPPKDIENWEQDPDVLDTWFSSALWPFSTMGWPDTDSPDYKRYYPTDVLVTGYDIIFFWVSRMIFQGLEFTGKRPFKDVLIHGLVRDAQGRKMSKSLGNGVDPMDVIDQYGADALRYFLATGSSPGQDLRFSTEKVEATWNFANKIWNASRFALMNMGGMTYEELDLSGEKTVADHWILTRLNETIETVTKLAEKYEFGERGRTLYNFIWDDLCDWYIEMAKLPLYGDDEAAKKTTRSVLAYVLDNTMRLLHPFMPFITEEIWQNLPHEGESITVAPWPQVRPELSNEEAAEEMRMLVDIIRAVRNVRAEVNTPPSKPIALYIKTKDEHVRAALLKNRAYLERFCNPSELLIDTNVPAPDKAMTAVVTGAELIMPLEGLINIEEEIKRLEKELDKWNKEVERVEKKLANEGFLAKAPAHVVEEERRKRQDYIEKREAVKARLAELKR.

Positions Pro-49–His-59 match the 'HIGH' region motif. A 'KMSKS' region motif is present at residues Lys-525–Ser-529. An ATP-binding site is contributed by Lys-528. Residues Leu-809–Arg-880 adopt a coiled-coil conformation.

The protein belongs to the class-I aminoacyl-tRNA synthetase family. ValS type 1 subfamily. In terms of assembly, monomer.

It localises to the cytoplasm. It carries out the reaction tRNA(Val) + L-valine + ATP = L-valyl-tRNA(Val) + AMP + diphosphate. Functionally, catalyzes the attachment of valine to tRNA(Val). As ValRS can inadvertently accommodate and process structurally similar amino acids such as threonine, to avoid such errors, it has a 'posttransfer' editing activity that hydrolyzes mischarged Thr-tRNA(Val) in a tRNA-dependent manner. This chain is Valine--tRNA ligase (valS), found in Geobacillus stearothermophilus (Bacillus stearothermophilus).